The primary structure comprises 432 residues: Trigger factor (432 aa).

The PPIase FKBP-type domain maps to 161 to 246 (EDRVTIDFTG…LKKVEERELP (86 aa)).

The protein belongs to the FKBP-type PPIase family. Tig subfamily. As to quaternary structure, homodimer and monomer. In vivo most of the ribosomes are in complex with monomeric TF. Uncomplexed TF, however, is in a monomer-dimer equilibrium with approximately two thirds of TF existing in a dimeric state.

It localises to the cytoplasm. The enzyme catalyses [protein]-peptidylproline (omega=180) = [protein]-peptidylproline (omega=0). In terms of biological role, involved in protein export. Acts as a chaperone by maintaining the newly synthesized protein in an open conformation. Functions as a peptidyl-prolyl cis-trans isomerase. The sequence is that of Trigger factor from Shigella dysenteriae serotype 1 (strain Sd197).